A 150-amino-acid polypeptide reads, in one-letter code: MEVILLTKVENLGNLGDKVRVRDGYARNYLVPQGKAKYATAENIAEFEARRAELEKAAAEALAVAEARRAKLEALEPVTIASKSGGEGKLFGSVGTHDIAEAVTAAGVEVEKREVRMPLGPIRQTGEYDIELHLHTDVNATVKVVVVAEQ.

It belongs to the bacterial ribosomal protein bL9 family.

Binds to the 23S rRNA. In Thioalkalivibrio sulfidiphilus (strain HL-EbGR7), this protein is Large ribosomal subunit protein bL9.